A 56-amino-acid polypeptide reads, in one-letter code: Large ribosomal subunit protein eL37 (56 aa).

The Zn(2+) site is built by Cys19, Cys22, Cys34, and Cys37. Residues 19–37 (CRRCGSVSLNIHTKQCTSC) form a C4-type zinc finger.

It belongs to the eukaryotic ribosomal protein eL37 family. The cofactor is Zn(2+).

Binds to the 23S rRNA. In Methanococcoides burtonii (strain DSM 6242 / NBRC 107633 / OCM 468 / ACE-M), this protein is Large ribosomal subunit protein eL37.